The chain runs to 117 residues: MAHLTQFEKRRQRVRTALRQRAAGRPRLSVHRSGRHIYAQLIDDAAGTTLAAASTLDKDVRGKTGATTAAAADVGKRLAAAAKKAGVTQVVFDRGGFLFHGRIKALADAAREGGLEF.

It belongs to the universal ribosomal protein uL18 family. As to quaternary structure, part of the 50S ribosomal subunit; part of the 5S rRNA/L5/L18/L25 subcomplex. Contacts the 5S and 23S rRNAs.

Functionally, this is one of the proteins that bind and probably mediate the attachment of the 5S RNA into the large ribosomal subunit, where it forms part of the central protuberance. This is Large ribosomal subunit protein uL18 from Sphingopyxis alaskensis (strain DSM 13593 / LMG 18877 / RB2256) (Sphingomonas alaskensis).